Here is a 150-residue protein sequence, read N- to C-terminus: FAD synthase (150 aa).

Residues 11–12 (TF), 16–19 (HPGH), aspartate 96, and tyrosine 124 contribute to the ATP site.

Belongs to the archaeal FAD synthase family. Homodimer. The cofactor is a divalent metal cation.

The catalysed reaction is FMN + ATP + H(+) = FAD + diphosphate. Its pathway is cofactor biosynthesis; FAD biosynthesis; FAD from FMN: step 1/1. Functionally, catalyzes the transfer of the AMP portion of ATP to flavin mononucleotide (FMN) to produce flavin adenine dinucleotide (FAD) coenzyme. The protein is FAD synthase of Methanococcus maripaludis (strain DSM 14266 / JCM 13030 / NBRC 101832 / S2 / LL).